The following is a 47-amino-acid chain: Potassium channel toxin alpha-KTx 7.1 (47 aa).

The N-terminal stretch at arginine 1–lysine 12 is a signal peptide. Intrachain disulfides connect cysteine 16/cysteine 37, cysteine 22/cysteine 42, and cysteine 26/cysteine 44.

The protein belongs to the short scorpion toxin superfamily. Potassium channel inhibitor family. Alpha-KTx 07 subfamily. As to expression, expressed by the venom gland.

The protein localises to the secreted. Its function is as follows. Potent inhibitor of the A-type voltage-gated potassium channels. Most potent inhibitor of Kv1.2/KCNA2 channels. Reversibly block the Shaker B potassium-channels (Kv1.1 sub-family). The polypeptide is Potassium channel toxin alpha-KTx 7.1 (PTX-1) (Pandinus imperator (Emperor scorpion)).